The primary structure comprises 97 residues: uncharacterized protein (97 aa).

This is an uncharacterized protein from Geobacillus stearothermophilus (Bacillus stearothermophilus).